A 368-amino-acid polypeptide reads, in one-letter code: Putative glutamate--cysteine ligase 2 (368 aa).

The protein belongs to the glutamate--cysteine ligase type 2 family. YbdK subfamily.

It carries out the reaction L-cysteine + L-glutamate + ATP = gamma-L-glutamyl-L-cysteine + ADP + phosphate + H(+). In terms of biological role, ATP-dependent carboxylate-amine ligase which exhibits weak glutamate--cysteine ligase activity. The sequence is that of Putative glutamate--cysteine ligase 2 from Pseudomonas putida (strain ATCC 47054 / DSM 6125 / CFBP 8728 / NCIMB 11950 / KT2440).